A 98-amino-acid chain; its full sequence is Protein translation factor SUI1 homolog (98 aa).

The protein belongs to the SUI1 family.

This Pyrococcus abyssi (strain GE5 / Orsay) protein is Protein translation factor SUI1 homolog.